The following is a 361-amino-acid chain: Peptide chain release factor 1 (361 aa).

An N5-methylglutamine modification is found at Gln-236. Over residues 285–309 (TAKDSARAADRKAQVGSGDRSERIR) the composition is skewed to basic and acidic residues. The segment at 285 to 313 (TAKDSARAADRKAQVGSGDRSERIRTYNF) is disordered.

The protein belongs to the prokaryotic/mitochondrial release factor family. Methylated by PrmC. Methylation increases the termination efficiency of RF1.

Its subcellular location is the cytoplasm. Its function is as follows. Peptide chain release factor 1 directs the termination of translation in response to the peptide chain termination codons UAG and UAA. This Methylorubrum populi (strain ATCC BAA-705 / NCIMB 13946 / BJ001) (Methylobacterium populi) protein is Peptide chain release factor 1.